The sequence spans 359 residues: Non-classical arabinogalactan protein 31 (359 aa).

The first 24 residues, 1 to 24 (MGFIGKSVLVSLVALWCFTSSVFT), serve as a signal peptide directing secretion. Residues 31–215 (TQTPSLAPAP…PPVSPPTKPP (185 aa)) form a disordered region. Residues 44–66 (HHGHHHPHPPHHHHPHPHPHPHP) are compositionally biased toward basic residues. A compositionally biased stretch (pro residues) spans 67–215 (PAKSPVKPPV…PPVSPPTKPP (149 aa)). 42 positions are modified to 4-hydroxyproline: Pro-71, Pro-75, Pro-79, Pro-82, Pro-83, Pro-87, Pro-91, Pro-95, Pro-99, Pro-103, Pro-107, Pro-111, Pro-114, Pro-115, Pro-119, Pro-123, Pro-127, Pro-131, Pro-135, Pro-139, Pro-143, Pro-147, Pro-151, Pro-155, Pro-159, Pro-163, Pro-167, Pro-171, Pro-175, Pro-179, Pro-183, Pro-186, Pro-187, Pro-191, Pro-195, Pro-199, Pro-203, Pro-207, Pro-210, Pro-211, Pro-215, and Pro-219. Residues Pro-71, Pro-75, Pro-79, Pro-82, Pro-83, Pro-87, Pro-91, Pro-95, Pro-99, Pro-103, Pro-107, Pro-111, Pro-114, Pro-115, Pro-119, Pro-123, Pro-127, Pro-131, Pro-135, Pro-139, Pro-143, Pro-147, Pro-151, Pro-155, Pro-159, Pro-163, Pro-167, Pro-171, Pro-175, Pro-179, Pro-183, Pro-186, Pro-187, Pro-191, Pro-195, Pro-199, Pro-203, Pro-207, Pro-210, Pro-211, Pro-215, and Pro-219 are each glycosylated (O-linked (Ara...) hydroxyproline). The stretch at 90-109 (PPVYPPTKAPVKPPTKPPVK) is repeat 1. A run of 3 repeats spans residues 122-141 (PPVY…PPVK), 142-161 (PPVY…PPVK), and 162-181 (PPVY…PPVK). Asn-226 and Asn-269 each carry an N-linked (GlcNAc...) asparagine glycan.

It belongs to the non-classical AGP family. In terms of processing, hydroxylated on numerous prolines in the proline-rich region. O-glycosylated on numerous hydroxyprolines in the proline-rich region; noncontiguous hydroxylproline residues are glycosylated with arabinogalactan. Expressed in vascular bundles of roots, leaves, sepals and stamen filaments, and pistils but not stigma.

It is found in the secreted. Its subcellular location is the cell wall. In terms of biological role, proteoglycan that may contribute to the strengthening of cell walls. The chain is Non-classical arabinogalactan protein 31 from Arabidopsis thaliana (Mouse-ear cress).